Consider the following 362-residue polypeptide: Peptide chain release factor 1 (362 aa).

At glutamine 237 the chain carries N5-methylglutamine. Basic and acidic residues predominate over residues glutamate 285 to threonine 295. The interval glutamate 285–threonine 311 is disordered.

Belongs to the prokaryotic/mitochondrial release factor family. Methylated by PrmC. Methylation increases the termination efficiency of RF1.

The protein localises to the cytoplasm. Peptide chain release factor 1 directs the termination of translation in response to the peptide chain termination codons UAG and UAA. The polypeptide is Peptide chain release factor 1 (Photobacterium profundum (strain SS9)).